A 264-amino-acid chain; its full sequence is Acetylglutamate kinase (264 aa).

Substrate is bound by residues 50-51, arginine 72, and asparagine 164; that span reads GG.

It belongs to the acetylglutamate kinase family. ArgB subfamily.

It localises to the cytoplasm. It carries out the reaction N-acetyl-L-glutamate + ATP = N-acetyl-L-glutamyl 5-phosphate + ADP. Its pathway is amino-acid biosynthesis; L-arginine biosynthesis; N(2)-acetyl-L-ornithine from L-glutamate: step 2/4. Catalyzes the ATP-dependent phosphorylation of N-acetyl-L-glutamate. The sequence is that of Acetylglutamate kinase from Moritella profunda.